The chain runs to 120 residues: ATP-dependent Clp protease adapter protein ClpS (120 aa).

Belongs to the ClpS family. As to quaternary structure, binds to the N-terminal domain of the chaperone ClpA.

Functionally, involved in the modulation of the specificity of the ClpAP-mediated ATP-dependent protein degradation. This is ATP-dependent Clp protease adapter protein ClpS from Pseudomonas syringae pv. tomato (strain ATCC BAA-871 / DC3000).